Here is a 165-residue protein sequence, read N- to C-terminus: Lipoprotein signal peptidase (165 aa).

Helical transmembrane passes span 7–27 (YFSS…LVLL), 46–66 (AVTS…FSFL), 72–92 (WQRY…IYLL), and 100–120 (LFCW…IDRV). Residues aspartate 127 and aspartate 145 contribute to the active site. Residues 136–156 (WHWPAFNIADSAICIGAVLFI) traverse the membrane as a helical segment.

This sequence belongs to the peptidase A8 family.

It is found in the cell inner membrane. The catalysed reaction is Release of signal peptides from bacterial membrane prolipoproteins. Hydrolyzes -Xaa-Yaa-Zaa-|-(S,diacylglyceryl)Cys-, in which Xaa is hydrophobic (preferably Leu), and Yaa (Ala or Ser) and Zaa (Gly or Ala) have small, neutral side chains.. It functions in the pathway protein modification; lipoprotein biosynthesis (signal peptide cleavage). This protein specifically catalyzes the removal of signal peptides from prolipoproteins. In Janthinobacterium sp. (strain Marseille) (Minibacterium massiliensis), this protein is Lipoprotein signal peptidase.